Consider the following 207-residue polypeptide: Small ribosomal subunit protein uS7y (207 aa).

A2 carries the N-acetylalanine modification.

This sequence belongs to the universal ribosomal protein uS7 family. As to expression, expressed in root tips, lateral root primordia, leaf primordia, shoot apical meristem and vasculature of cotyledons.

This chain is Small ribosomal subunit protein uS7y, found in Arabidopsis thaliana (Mouse-ear cress).